The chain runs to 967 residues: Glutamate receptor 2.6 (967 aa).

A signal peptide spans 1-31; that stretch reads MSLFNHLLSRALPLWLLFFINFLVLLGKSQQ. Over 32-590 the chain is Extracellular; it reads EVLQVQVGIV…WVFLKPLTRE (559 aa). Residues N45, N57, N121, N336, N345, N424, and N550 are each glycosylated (N-linked (GlcNAc...) asparagine). Residues 591–611 traverse the membrane as a helical segment; it reads LWFLTAASFLYIGIMVWIFEY. The Cytoplasmic portion of the chain corresponds to 612–621; it reads QASGDFRKQS. Residues 622–642 traverse the membrane as a helical segment; it reads IINKISNVFYFSFSTLFFAHM. Topologically, residues 643-651 are cytoplasmic; sequence RPSESIFTR. The helical transmembrane segment at 652–672 threads the bilayer; the sequence is VLVVVWCFVLLILTQSYTATL. Topologically, residues 673–832 are extracellular; the sequence is TSMLTVQELR…DSPIRLDHHS (160 aa). N795 carries N-linked (GlcNAc...) asparagine glycosylation. A helical membrane pass occupies residues 833–853; the sequence is FEALFTIVFVVSMLLLLAMLV. At 854–967 the chain is on the cytoplasmic side; that stretch reads CRRYRQESKS…AALFSRIKSA (114 aa). The span at 864 to 874 shows a compositional bias: polar residues; sequence GEINANNSPTD. Positions 864-913 are disordered; the sequence is GEINANNSPTDGNMRAPPNQPTDDNMRAPTSPPIDDQVLEPPGPALNEAD.

This sequence belongs to the glutamate-gated ion channel (TC 1.A.10.1) family. In terms of assembly, may form heteromers. As to expression, expressed predominantly in roots.

Its subcellular location is the membrane. Glutamate-gated receptor that probably acts as a non-selective cation channel. May be involved in light-signal transduction and calcium homeostasis via the regulation of calcium influx into cells. The polypeptide is Glutamate receptor 2.6 (GLR2.6) (Arabidopsis thaliana (Mouse-ear cress)).